A 303-amino-acid polypeptide reads, in one-letter code: Methionyl-tRNA formyltransferase (303 aa).

Position 106–109 (106–109) interacts with (6S)-5,6,7,8-tetrahydrofolate; it reads SLLP.

It belongs to the Fmt family.

It catalyses the reaction L-methionyl-tRNA(fMet) + (6R)-10-formyltetrahydrofolate = N-formyl-L-methionyl-tRNA(fMet) + (6S)-5,6,7,8-tetrahydrofolate + H(+). Functionally, attaches a formyl group to the free amino group of methionyl-tRNA(fMet). The formyl group appears to play a dual role in the initiator identity of N-formylmethionyl-tRNA by promoting its recognition by IF2 and preventing the misappropriation of this tRNA by the elongation apparatus. The sequence is that of Methionyl-tRNA formyltransferase from Thermosipho melanesiensis (strain DSM 12029 / CIP 104789 / BI429).